Here is a 223-residue protein sequence, read N- to C-terminus: uncharacterized protein (223 aa).

Positions 1–11 (MLWVQRKRRRK) are enriched in basic residues. The tract at residues 1–37 (MLWVQRKRRRKETSECPSDKDKSPESHKAKNESWIKS) is disordered. The span at 12 to 37 (ETSECPSDKDKSPESHKAKNESWIKS) shows a compositional bias: basic and acidic residues. The residue at position 43 (serine 43) is a Phosphoserine. Disordered stretches follow at residues 49–73 (LDNN…SSTV) and 196–223 (THTF…NRRH). The segment covering 51–61 (NNASASGNATQ) has biased composition (polar residues). Residues 62-73 (TESGSEEVSSTV) show a composition bias toward low complexity. Over residues 202-223 (HSHHSHHGHPSHQSHSLPNRRH) the composition is skewed to basic residues.

This is an uncharacterized protein from Homo sapiens (Human).